An 827-amino-acid polypeptide reads, in one-letter code: uncharacterized protein (827 aa).

The PAS 1 domain occupies 12 to 82; it reads FDADFEAILN…DMDIGVLSTG (71 aa). The PAC 1 domain maps to 212 to 264; that stretch reads LDVEFRLAAAEGGYSWYRSRAATRRAEDGSILRWYGTVEDIDDRRKMFEALKE. The 71-residue stretch at 265 to 335 folds into the PAS 2 domain; sequence SEARFRAIAD…RVFYQAFDLR (71 aa). The PAC 2 domain occupies 338–390; it reads VRMEYRLKRAGGGSAWVIDIGQPRFASDGTFLGFVGIALDITERRNAEQERLL. Residues 428 to 561 enclose the GGDEF domain; that stretch reads TRLAILCLDL…GGGTIVQYEP (134 aa). In terms of domain architecture, EAL spans 570-820; it reads RQRMKVSLRH…QAMALLKSRS (251 aa).

This is an uncharacterized protein from Sinorhizobium fredii (strain NBRC 101917 / NGR234).